A 206-amino-acid chain; its full sequence is Small ribosomal subunit protein uS4c (206 aa).

In terms of domain architecture, S4 RNA-binding spans 94–152; it reads MRLDNIVFRLGMAPTIPAARQLVNHRHILVNDFTVNIPSYSCKLGDKISVQKRFESKTN.

This sequence belongs to the universal ribosomal protein uS4 family. In terms of assembly, part of the 30S ribosomal subunit. Contacts protein S5. The interaction surface between S4 and S5 is involved in control of translational fidelity.

It localises to the plastid. The protein localises to the chloroplast. In terms of biological role, one of the primary rRNA binding proteins, it binds directly to 16S rRNA where it nucleates assembly of the body of the 30S subunit. Its function is as follows. With S5 and S12 plays an important role in translational accuracy. The protein is Small ribosomal subunit protein uS4c (rps4) of Chara vulgaris (Common stonewort).